Reading from the N-terminus, the 893-residue chain is Flippase kinase 1 (893 aa).

The segment covering 1–23 (MAGHHHEHEQERDHEQEHEHDSL) has biased composition (basic and acidic residues). Disordered stretches follow at residues 1–124 (MAGH…SSKL), 129–148 (PMTS…PTIP), and 163–243 (QHEH…ERAG). Over residues 24–42 (QRPTTGSERTRSISFSKLL) the composition is skewed to polar residues. A compositionally biased stretch (low complexity) spans 49-62 (NASSSNNMSVSSVN). The span at 76-87 (NNSGSEGQSSRF) shows a compositional bias: polar residues. Low complexity predominate over residues 96 to 122 (SGNSSKNASAHNSSQSSLEGDSASSSS). A phosphoserine mark is found at Ser140, Ser144, Ser171, Ser175, and Ser185. Over residues 206 to 216 (SQNSNNSSSTS) the composition is skewed to low complexity. The span at 228–237 (GSQGFSSNNP) shows a compositional bias: polar residues. Phosphoserine is present on Ser300. Positions 334–355 (DTLNGSPSRGSSKSPTITQTFP) are enriched in polar residues. The disordered stretch occupies residues 334 to 480 (DTLNGSPSRG…PRRSRRLRTK (147 aa)). A compositionally biased stretch (basic and acidic residues) spans 370–380 (NNDKHDEKEEQ). Polar residues predominate over residues 381–399 (QTTTDNKTRNLSPTKQNGK). The residue at position 414 (Ser414) is a Phosphoserine. Positions 422 to 439 (ASATSPTSSSARKTSGSS) are enriched in low complexity. Ser462 carries the post-translational modification Phosphoserine. In terms of domain architecture, Protein kinase spans 496–777 (FEKIRLLGQG…AADVKKHPFF (282 aa)). Residues 502 to 510 (LGQGDVGKV) and Lys525 each bind ATP. The active-site Proton acceptor is the Asp621. The region spanning 778–861 (KKVQWSLLRN…MSLMEQDNNS (84 aa)) is the AGC-kinase C-terminal domain. Residues 874-893 (AYTPNSNRSRSNSHRTFFKR) form a disordered region. The segment covering 884–893 (SNSHRTFFKR) has biased composition (basic residues).

The protein belongs to the protein kinase superfamily. Ser/Thr protein kinase family. KIN82 subfamily. The N-terminal non-catalytic domain is phosphorylated by YPK1.

Its subcellular location is the cytoplasm. It is found in the cell membrane. It catalyses the reaction L-seryl-[protein] + ATP = O-phospho-L-seryl-[protein] + ADP + H(+). The enzyme catalyses L-threonyl-[protein] + ATP = O-phospho-L-threonyl-[protein] + ADP + H(+). Its activity is regulated as follows. Down-regulated by YKP1 phosphorylation. This effect is counteracted in the presence of mannosyl-inositolphosphorylceramide (MIPC). Flippase activator that phosphorylates DNF1 and DNF2 and which is involved in the generation of phospholipid asymmetry in membranes by the inward translocation of phospholipids and in the retrieval pathway from early endosomes to the trans-Golgi network (TGN). Also phosphorylates the N-terminal half of YPK1. Involved in pheromone-response. This chain is Flippase kinase 1 (FPK1), found in Saccharomyces cerevisiae (strain ATCC 204508 / S288c) (Baker's yeast).